Reading from the N-terminus, the 347-residue chain is Gamma-glutamyl hydrolase B (347 aa).

Residues 1-22 (MIKLFSLFIYLYLISNLKLINT) form the signal peptide. The region spanning 23-314 (INNTPVIGIL…THVEQIYIFN (292 aa)) is the Gamma-glutamyl hydrolase domain. Cys-128 functions as the Nucleophile in the catalytic mechanism. N-linked (GlcNAc...) asparagine glycosylation is found at Asn-152, Asn-158, and Asn-201. The Proton donor role is filled by His-240. N-linked (GlcNAc...) asparagine glycosylation is found at Asn-273, Asn-314, and Asn-318.

Belongs to the peptidase C26 family.

The protein localises to the secreted. It localises to the extracellular space. It carries out the reaction (6S)-5,6,7,8-tetrahydrofolyl-(gamma-L-Glu)(n) + (n-1) H2O = (6S)-5,6,7,8-tetrahydrofolate + (n-1) L-glutamate. This Dictyostelium discoideum (Social amoeba) protein is Gamma-glutamyl hydrolase B (gghB).